The chain runs to 176 residues: MDLSEPIHDFLLVFLGSGLILGGLGVVLLPNPIYSAFSLGLVLVCTSLFYILSNSYFVAAAQLLIYVGAINVLIIFAVMFMNGSEYYKDFHLWTVGDGITSMVCISLFISLITTISDTSWYGIIWTTRSNQIIEQDFISNSQQIGIHLSTDFFLPFELISIILLVALIGAIAVARQ.

The next 5 membrane-spanning stretches (helical) occupy residues 10–30 (FLLVFLGSGLILGGLGVVLLP), 32–52 (PIYSAFSLGLVLVCTSLFYIL), 61–81 (AQLLIYVGAINVLIIFAVMFM), 92–112 (LWTVGDGITSMVCISLFISLI), and 152–172 (FFLPFELISIILLVALIGAIA).

This sequence belongs to the complex I subunit 6 family. In terms of assembly, NDH is composed of at least 16 different subunits, 5 of which are encoded in the nucleus.

It localises to the plastid. Its subcellular location is the chloroplast thylakoid membrane. It catalyses the reaction a plastoquinone + NADH + (n+1) H(+)(in) = a plastoquinol + NAD(+) + n H(+)(out). The enzyme catalyses a plastoquinone + NADPH + (n+1) H(+)(in) = a plastoquinol + NADP(+) + n H(+)(out). NDH shuttles electrons from NAD(P)H:plastoquinone, via FMN and iron-sulfur (Fe-S) centers, to quinones in the photosynthetic chain and possibly in a chloroplast respiratory chain. The immediate electron acceptor for the enzyme in this species is believed to be plastoquinone. Couples the redox reaction to proton translocation, and thus conserves the redox energy in a proton gradient. The sequence is that of NAD(P)H-quinone oxidoreductase subunit 6, chloroplastic (ndhG) from Nicotiana tabacum (Common tobacco).